We begin with the raw amino-acid sequence, 139 residues long: ATP synthase epsilon chain (139 aa).

This sequence belongs to the ATPase epsilon chain family. F-type ATPases have 2 components, CF(1) - the catalytic core - and CF(0) - the membrane proton channel. CF(1) has five subunits: alpha(3), beta(3), gamma(1), delta(1), epsilon(1). CF(0) has three main subunits: a, b and c.

It localises to the cell inner membrane. Functionally, produces ATP from ADP in the presence of a proton gradient across the membrane. The sequence is that of ATP synthase epsilon chain from Shigella boydii serotype 18 (strain CDC 3083-94 / BS512).